A 74-amino-acid polypeptide reads, in one-letter code: Ubiquitin-like protein FUBI (74 aa).

The protein belongs to the ubiquitin family.

The polypeptide is Ubiquitin-like protein FUBI (FAU) (Pongo abelii (Sumatran orangutan)).